We begin with the raw amino-acid sequence, 527 residues long: Aspartokinase (527 aa).

Thr333 carries the post-translational modification Phosphothreonine. The region spanning 442–527 is the ACT domain; it reads LVGKHMKQYI…RLEQLKRLGI (86 aa).

Belongs to the aspartokinase family. As to quaternary structure, homohexamer. Interacts with FPR1; the interaction is direct, plays a role in feedback inhibition of aspartokinase by threonine, and inhibited by tacrolimus and sirolimus.

It carries out the reaction L-aspartate + ATP = 4-phospho-L-aspartate + ADP. The protein operates within amino-acid biosynthesis; L-methionine biosynthesis via de novo pathway; L-homoserine from L-aspartate: step 1/3. Its pathway is amino-acid biosynthesis; L-threonine biosynthesis; L-threonine from L-aspartate: step 1/5. With respect to regulation, allosterically inhibited by threonine. Phosphorylates aspartate, the first step in the biosynthesis of amino acids that derive from aspartate (the aspartate family of amino acids), including methioinine and threonine, the latter of which is a precursor to isoleucine. This Saccharomyces cerevisiae (strain ATCC 204508 / S288c) (Baker's yeast) protein is Aspartokinase (HOM3).